A 555-amino-acid polypeptide reads, in one-letter code: Oligo-1,6-glucosidase (555 aa).

Asp-199 functions as the Nucleophile in the catalytic mechanism. Glu-255 functions as the Proton donor in the catalytic mechanism.

This sequence belongs to the glycosyl hydrolase 13 family.

The protein resides in the cytoplasm. It catalyses the reaction Hydrolysis of (1-&gt;6)-alpha-D-glucosidic linkages in some oligosaccharides produced from starch and glycogen by alpha-amylase, and in isomaltose.. The polypeptide is Oligo-1,6-glucosidase (malL) (Heyndrickxia coagulans (Weizmannia coagulans)).